The following is a 449-amino-acid chain: Phosphoglucosamine mutase (449 aa).

Serine 102 functions as the Phosphoserine intermediate in the catalytic mechanism. Residues serine 102, aspartate 243, aspartate 245, and aspartate 247 each coordinate Mg(2+). A Phosphoserine modification is found at serine 102.

It belongs to the phosphohexose mutase family. The cofactor is Mg(2+). Activated by phosphorylation.

It catalyses the reaction alpha-D-glucosamine 1-phosphate = D-glucosamine 6-phosphate. Catalyzes the conversion of glucosamine-6-phosphate to glucosamine-1-phosphate. This chain is Phosphoglucosamine mutase, found in Maricaulis maris (strain MCS10) (Caulobacter maris).